A 173-amino-acid chain; its full sequence is NADH-ubiquinone oxidoreductase chain 6 (173 aa).

6 helical membrane-spanning segments follow: residues 1 to 21, 27 to 47, 48 to 68, 85 to 105, 106 to 126, and 139 to 159; these read MTYF…AVAS, YGVV…LSLG, VSFV…VVFV, WGVV…LIVG, GSIG…MFSV, and CGVG…FVVL.

It belongs to the complex I subunit 6 family.

The protein resides in the mitochondrion membrane. It catalyses the reaction a ubiquinone + NADH + 5 H(+)(in) = a ubiquinol + NAD(+) + 4 H(+)(out). Core subunit of the mitochondrial membrane respiratory chain NADH dehydrogenase (Complex I) that is believed to belong to the minimal assembly required for catalysis. Complex I functions in the transfer of electrons from NADH to the respiratory chain. The immediate electron acceptor for the enzyme is believed to be ubiquinone. In Aethia psittacula (Parakeet auklet), this protein is NADH-ubiquinone oxidoreductase chain 6 (MT-ND6).